The primary structure comprises 507 residues: UDP-N-acetylmuramoyl-L-alanyl-D-glutamate--2,6-diaminopimelate ligase (507 aa).

Serine 32 provides a ligand contact to UDP-N-acetyl-alpha-D-muramoyl-L-alanyl-D-glutamate. 117 to 123 (GTNGKTT) contributes to the ATP binding site. UDP-N-acetyl-alpha-D-muramoyl-L-alanyl-D-glutamate is bound by residues 159 to 160 (TT), serine 186, glutamine 192, and arginine 194. Lysine 226 carries the post-translational modification N6-carboxylysine. Residues arginine 400, 424–427 (DNPR), glycine 475, and glutamate 479 each bind meso-2,6-diaminopimelate. The Meso-diaminopimelate recognition motif motif lies at 424–427 (DNPR).

The protein belongs to the MurCDEF family. MurE subfamily. It depends on Mg(2+) as a cofactor. Carboxylation is probably crucial for Mg(2+) binding and, consequently, for the gamma-phosphate positioning of ATP.

The protein localises to the cytoplasm. It carries out the reaction UDP-N-acetyl-alpha-D-muramoyl-L-alanyl-D-glutamate + meso-2,6-diaminopimelate + ATP = UDP-N-acetyl-alpha-D-muramoyl-L-alanyl-gamma-D-glutamyl-meso-2,6-diaminopimelate + ADP + phosphate + H(+). It participates in cell wall biogenesis; peptidoglycan biosynthesis. Catalyzes the addition of meso-diaminopimelic acid to the nucleotide precursor UDP-N-acetylmuramoyl-L-alanyl-D-glutamate (UMAG) in the biosynthesis of bacterial cell-wall peptidoglycan. In Prochlorococcus marinus (strain MIT 9313), this protein is UDP-N-acetylmuramoyl-L-alanyl-D-glutamate--2,6-diaminopimelate ligase.